The primary structure comprises 469 residues: Glutamate--tRNA ligase (469 aa).

A 'HIGH' region motif is present at residues 9-19; it reads PSPTGFLHVGG. Positions 236–240 match the 'KMSKS' region motif; sequence KLSKR. Lys239 provides a ligand contact to ATP.

Belongs to the class-I aminoacyl-tRNA synthetase family. Glutamate--tRNA ligase type 1 subfamily. Monomer.

The protein localises to the cytoplasm. The catalysed reaction is tRNA(Glu) + L-glutamate + ATP = L-glutamyl-tRNA(Glu) + AMP + diphosphate. Its function is as follows. Catalyzes the attachment of glutamate to tRNA(Glu) in a two-step reaction: glutamate is first activated by ATP to form Glu-AMP and then transferred to the acceptor end of tRNA(Glu). The polypeptide is Glutamate--tRNA ligase (Shewanella frigidimarina (strain NCIMB 400)).